A 366-amino-acid polypeptide reads, in one-letter code: Chorismate synthase (366 aa).

The NADP(+) site is built by Arg-48 and Arg-54. FMN contacts are provided by residues 125–127 (RSS), 238–239 (NA), Gly-278, 293–297 (KPTSS), and Arg-319.

The protein belongs to the chorismate synthase family. Homotetramer. It depends on FMNH2 as a cofactor.

The catalysed reaction is 5-O-(1-carboxyvinyl)-3-phosphoshikimate = chorismate + phosphate. The protein operates within metabolic intermediate biosynthesis; chorismate biosynthesis; chorismate from D-erythrose 4-phosphate and phosphoenolpyruvate: step 7/7. Functionally, catalyzes the anti-1,4-elimination of the C-3 phosphate and the C-6 proR hydrogen from 5-enolpyruvylshikimate-3-phosphate (EPSP) to yield chorismate, which is the branch point compound that serves as the starting substrate for the three terminal pathways of aromatic amino acid biosynthesis. This reaction introduces a second double bond into the aromatic ring system. The chain is Chorismate synthase from Ralstonia pickettii (strain 12J).